Reading from the N-terminus, the 590-residue chain is MATIGRRAYAEMFGPTVGDRLRLADTGLILEVEADYTLRAGSYGEEVKFGGGKTIRDGMAQAQHSRAQGAVDTVLTNALIMDAAGIVKADIGLRDGRIAAIGKAGNPDTQAGVDIIIGPGTEVISCEGQIVTAGGIDSHIHFICPQQIEHALASGVTTMLGGGTGPATGTLATTCTPGPWNIERMLQAADAFAVNLGFLGKGNASLPGALHEQIDAGAIGLKLHEDWGSTPAAISNCLDVAEATDTQVALHSDTLNESGFVENTIAAVGGRGICAFHTEGAGGGHAPDILRVVGEANFLPSSTNPTMPYTHNTLDEHVDMLMVCHHLDASIAEDLAFAESRIRKETIAAEDILHDLGAISMMSSDSQAMGRVGEVILRTWQTAHKMKQQRGWLSPPAAGQGAGLSSAAGQGVDHDTRNDNFRIKRYLAKYTINPAIAHGISHEVGSIAVGKWADIVLWKPAFFGVKPALILKGGQIALAAMGDPNASIPTPQPVHYRPMFGAFGGAIAKTSLTFVSQAGLQAGIGQRYGLRKTLSAVRGIRGIRKRDMVHNSYLPQMEIDAQTYMVRADGQWLSCEPATELPLAQRYFLF.

In terms of domain architecture, Urease spans 134-590 (GGIDSHIHFI…LPLAQRYFLF (457 aa)). Residues histidine 139, histidine 141, and lysine 222 each coordinate Ni(2+). At lysine 222 the chain carries N6-carboxylysine. Histidine 224 contributes to the substrate binding site. Residues histidine 251 and histidine 277 each contribute to the Ni(2+) site. The active-site Proton donor is histidine 325. Aspartate 365 contributes to the Ni(2+) binding site. The interval 388 to 416 (QQRGWLSPPAAGQGAGLSSAAGQGVDHDT) is disordered. Low complexity predominate over residues 393-411 (LSPPAAGQGAGLSSAAGQG).

Belongs to the metallo-dependent hydrolases superfamily. Urease alpha subunit family. As to quaternary structure, heterotrimer of UreA (gamma), UreB (beta) and UreC (alpha) subunits. Three heterotrimers associate to form the active enzyme. Requires Ni cation as cofactor. In terms of processing, carboxylation allows a single lysine to coordinate two nickel ions.

Its subcellular location is the cytoplasm. The catalysed reaction is urea + 2 H2O + H(+) = hydrogencarbonate + 2 NH4(+). Its pathway is nitrogen metabolism; urea degradation; CO(2) and NH(3) from urea (urease route): step 1/1. This is Urease subunit alpha from Verminephrobacter eiseniae (strain EF01-2).